The sequence spans 686 residues: Myb-related protein B (686 aa).

Positions M1–G28 are disordered. HTH myb-type domains lie at R26–L77, N78–V133, and K134–V184. DNA-binding regions (H-T-H motif) lie at residues W54–L77, W106–L129, and W157–I180. 2 disordered regions span residues C315–Y355 and Y493–Y512. The span at P326–S343 shows a compositional bias: low complexity.

In terms of assembly, component of the DREAM complex. Expressed in hematopoietic and non hematopoietic cells.

It localises to the nucleus. Represses v-myb- and c-myb-mediated activation of the mim-1 gene, probably by competing with other myb proteins for binding sites. It is an inhibitory member of the myb family. This chain is Myb-related protein B (MYBL2), found in Gallus gallus (Chicken).